The sequence spans 388 residues: Succinyl-diaminopimelate desuccinylase (388 aa).

Histidine 72 provides a ligand contact to Zn(2+). The active site involves aspartate 74. Aspartate 105 contributes to the Zn(2+) binding site. Glutamate 139 serves as the catalytic Proton acceptor. Residues glutamate 140, glutamate 168, and histidine 353 each coordinate Zn(2+).

Belongs to the peptidase M20A family. DapE subfamily. In terms of assembly, homodimer. It depends on Zn(2+) as a cofactor. Requires Co(2+) as cofactor.

The catalysed reaction is N-succinyl-(2S,6S)-2,6-diaminopimelate + H2O = (2S,6S)-2,6-diaminopimelate + succinate. It participates in amino-acid biosynthesis; L-lysine biosynthesis via DAP pathway; LL-2,6-diaminopimelate from (S)-tetrahydrodipicolinate (succinylase route): step 3/3. Functionally, catalyzes the hydrolysis of N-succinyl-L,L-diaminopimelic acid (SDAP), forming succinate and LL-2,6-diaminopimelate (DAP), an intermediate involved in the bacterial biosynthesis of lysine and meso-diaminopimelic acid, an essential component of bacterial cell walls. The chain is Succinyl-diaminopimelate desuccinylase from Orientia tsutsugamushi (strain Boryong) (Rickettsia tsutsugamushi).